We begin with the raw amino-acid sequence, 349 residues long: UDP-3-O-acylglucosamine N-acyltransferase 1 (349 aa).

Catalysis depends on H241, which acts as the Proton acceptor.

This sequence belongs to the transferase hexapeptide repeat family. LpxD subfamily. Homotrimer.

It catalyses the reaction a UDP-3-O-[(3R)-3-hydroxyacyl]-alpha-D-glucosamine + a (3R)-hydroxyacyl-[ACP] = a UDP-2-N,3-O-bis[(3R)-3-hydroxyacyl]-alpha-D-glucosamine + holo-[ACP] + H(+). It functions in the pathway bacterial outer membrane biogenesis; LPS lipid A biosynthesis. Its function is as follows. Catalyzes the N-acylation of UDP-3-O-acylglucosamine using 3-hydroxyacyl-ACP as the acyl donor. Is involved in the biosynthesis of lipid A, a phosphorylated glycolipid that anchors the lipopolysaccharide to the outer membrane of the cell. This Gloeobacter violaceus (strain ATCC 29082 / PCC 7421) protein is UDP-3-O-acylglucosamine N-acyltransferase 1.